Reading from the N-terminus, the 233-residue chain is 7-cyano-7-deazaguanine synthase (233 aa).

Residue 7–17 coordinates ATP; sequence LSGGLDSAVTS. Zn(2+) is bound by residues Cys195, Cys206, Cys209, and Cys212.

This sequence belongs to the QueC family. Requires Zn(2+) as cofactor.

The enzyme catalyses 7-carboxy-7-deazaguanine + NH4(+) + ATP = 7-cyano-7-deazaguanine + ADP + phosphate + H2O + H(+). Its pathway is purine metabolism; 7-cyano-7-deazaguanine biosynthesis. In terms of biological role, catalyzes the ATP-dependent conversion of 7-carboxy-7-deazaguanine (CDG) to 7-cyano-7-deazaguanine (preQ(0)). The sequence is that of 7-cyano-7-deazaguanine synthase from Methanococcus maripaludis (strain DSM 14266 / JCM 13030 / NBRC 101832 / S2 / LL).